Reading from the N-terminus, the 399-residue chain is Alpha-tubulin N-acetyltransferase (399 aa).

One can recognise an N-acetyltransferase domain in the interval 1–178 (MEFNFIINKL…NNFVVFDQYF (178 aa)). Acetyl-CoA contacts are provided by residues 112–125 (FYVH…GYGK) and 148–157 (SPKLIAFLKK). The span at 183–193 (SSQNKQNQNTR) shows a compositional bias: polar residues. The tract at residues 183–223 (SSQNKQNQNTRSYSQPYSDYSSQIPTNYPQQQQQQSNSKSY) is disordered. The segment covering 194–223 (SYSQPYSDYSSQIPTNYPQQQQQQSNSKSY) has biased composition (low complexity).

Belongs to the acetyltransferase ATAT1 family.

The enzyme catalyses L-lysyl-[alpha-tubulin] + acetyl-CoA = N(6)-acetyl-L-lysyl-[alpha-tubulin] + CoA + H(+). Specifically acetylates 'Lys-40' in alpha-tubulin on the lumenal side of microtubules. Promotes microtubule destabilization and accelerates microtubule dynamics; this activity may be independent of acetylation activity. Acetylates alpha-tubulin with a slow enzymatic rate, due to a catalytic site that is not optimized for acetyl transfer. Enters the microtubule through each end and diffuses quickly throughout the lumen of microtubules. Acetylates only long/old microtubules because of its slow acetylation rate since it does not have time to act on dynamically unstable microtubules before the enzyme is released. The sequence is that of Alpha-tubulin N-acetyltransferase from Tetrahymena thermophila (strain SB210).